Here is a 268-residue protein sequence, read N- to C-terminus: Tetraspanin-33 (268 aa).

Over 1–23 the chain is Cytoplasmic; sequence MVRKSPGSGKEEDFTFISPVVKY. A helical membrane pass occupies residues 24–44; sequence LLIFFNMLFWVISMVMVGIGV. The Extracellular portion of the chain corresponds to 45–63; the sequence is YARLLKHAEAAMACLAVDP. Residues 64-84 traverse the membrane as a helical segment; that stretch reads ALLLIGVGILMFLITFCGCIG. Topologically, residues 85–95 are cytoplasmic; it reads SLRENICLLQT. The chain crosses the membrane as a helical span at residues 96-116; that stretch reads FSICLTLVFLLQLAVGIVGFI. Residues 117–226 are Extracellular-facing; it reads FSDKARGKVS…FIHTNGCIDR (110 aa). Intrachain disulfides connect cysteine 155–cysteine 223, cysteine 156–cysteine 188, cysteine 172–cysteine 182, and cysteine 189–cysteine 202. N-linked (GlcNAc...) asparagine glycosylation is found at asparagine 171 and asparagine 176. The helical transmembrane segment at 227 to 247 threads the bilayer; that stretch reads LVNWIHSNLFLLGGVALGLAI. The Cytoplasmic segment spans residues 248 to 268; it reads PQVTKHLRAKLIYTWRIGIQV.

This sequence belongs to the tetraspanin (TM4SF) family. As to quaternary structure, homodimer; disulfide-linked.

Its subcellular location is the cell membrane. The protein resides in the cell junction. It localises to the adherens junction. The protein localises to the cytoplasm. Its function is as follows. Part of TspanC8 subgroup, composed of 6 members that interact with the transmembrane metalloprotease ADAM10. This interaction is required for ADAM10 exit from the endoplasmic reticulum and for enzymatic maturation and trafficking to the cell surface as well as substrate specificity. Different TspanC8/ADAM10 complexes have distinct substrates. The chain is Tetraspanin-33 (tspan33) from Xenopus laevis (African clawed frog).